A 463-amino-acid chain; its full sequence is Asparagine--tRNA ligase (463 aa).

Belongs to the class-II aminoacyl-tRNA synthetase family. In terms of assembly, homodimer.

Its subcellular location is the cytoplasm. It catalyses the reaction tRNA(Asn) + L-asparagine + ATP = L-asparaginyl-tRNA(Asn) + AMP + diphosphate + H(+). This chain is Asparagine--tRNA ligase, found in Clostridium botulinum (strain ATCC 19397 / Type A).